Here is a 325-residue protein sequence, read N- to C-terminus: MTTDVKDELSRLVVKSVSARRAEVTSLLRFAGGLHIVGGRVVVEAELDLGSIARRLRKEIFELYGYTAVVHVLSASGIRKSTRYVLRVANDGEALARQTGLLDMRGRPVRGLPAQVVGGSIDDAEAAWRGAFLAHGSLTEPGRSSALEVSCPGPEAALALVGAARRLGVGAKAREVRGADRVVVRDGEAIGALLTRMGAQDTRLVWEERRLRREVRATANRLANFDDANLRRSARAAVAAAARVERALEILGDTVPEHLASAGKLRVEHRQASLEELGRLADPPMTKDAVAGRIRRLLSMADRKAKVDGIPDTESVVTPDLLEDA.

Residues 273-306 (SLEELGRLADPPMTKDAVAGRIRRLLSMADRKAK) constitute a DNA-binding region (H-T-H motif).

This sequence belongs to the WhiA family.

In terms of biological role, involved in cell division and chromosome segregation. This chain is Probable cell division protein WhiA, found in Mycobacterium bovis (strain BCG / Tokyo 172 / ATCC 35737 / TMC 1019).